A 268-amino-acid chain; its full sequence is Large ribosomal subunit protein uL3 (268 aa).

Position 156 is an N5-methylglutamine (Gln-156). Positions 242–259 (VENEAAPADADNAAPEAA) are enriched in low complexity. A disordered region spans residues 242 to 268 (VENEAAPADADNAAPEAAADGEEGTQA).

This sequence belongs to the universal ribosomal protein uL3 family. As to quaternary structure, part of the 50S ribosomal subunit. Forms a cluster with proteins L14 and L19. Post-translationally, methylated by PrmB.

Functionally, one of the primary rRNA binding proteins, it binds directly near the 3'-end of the 23S rRNA, where it nucleates assembly of the 50S subunit. This is Large ribosomal subunit protein uL3 from Maricaulis maris (strain MCS10) (Caulobacter maris).